Reading from the N-terminus, the 233-residue chain is 2-C-methyl-D-erythritol 4-phosphate cytidylyltransferase (233 aa).

Belongs to the IspD/TarI cytidylyltransferase family. IspD subfamily.

The enzyme catalyses 2-C-methyl-D-erythritol 4-phosphate + CTP + H(+) = 4-CDP-2-C-methyl-D-erythritol + diphosphate. It functions in the pathway isoprenoid biosynthesis; isopentenyl diphosphate biosynthesis via DXP pathway; isopentenyl diphosphate from 1-deoxy-D-xylulose 5-phosphate: step 2/6. In terms of biological role, catalyzes the formation of 4-diphosphocytidyl-2-C-methyl-D-erythritol from CTP and 2-C-methyl-D-erythritol 4-phosphate (MEP). In Lachnoclostridium phytofermentans (strain ATCC 700394 / DSM 18823 / ISDg) (Clostridium phytofermentans), this protein is 2-C-methyl-D-erythritol 4-phosphate cytidylyltransferase.